We begin with the raw amino-acid sequence, 487 residues long: Iron-sulfur cluster assembly SufBD family protein ycf24 (487 aa).

This sequence belongs to the iron-sulfur cluster assembly SufBD family.

The protein resides in the plastid. The protein localises to the chloroplast. This chain is Iron-sulfur cluster assembly SufBD family protein ycf24 (ycf24), found in Pyropia yezoensis (Susabi-nori).